The sequence spans 432 residues: FAD-dependent monooxygenase pynG (432 aa).

Residues E32, R103, D315, and A328 each contribute to the FAD site.

It belongs to the paxM FAD-dependent monooxygenase family. It depends on FAD as a cofactor.

The protein operates within secondary metabolite biosynthesis. Its function is as follows. FAD-dependent monooxygenase; part of the gene cluster that mediates the biosynthesis of pyranonigrins, a family of antioxidative compounds. The first step of pyranonigrins biosynthesis is performed by the hybrid PKS-NRPS synthetase that condenses 6 malonyl-CoA units to an acetyl starter unit, to form a 1,3,5-trioxotetradecane-6,8-dienyl-ACP. The enoyl reductase (ER) domain of pynA is likely to be functional during the first two rounds of polyketide chain extension, to generate the saturated C-C bonds of the alkyl side chain. PynA subsequently forms the amide bond between the acyl chain and L-serine. Although pynA has a terminal reductase domain, it appears to require the thioesterase pynI for the release of the straight-chain intermediate from pynA via the formation of a tetramic acid pyranonigrin J. The methyltransferase pynC then coverts pyranonigrin J to pyranonigrin I via N-methylation. The FAD-dependent monooxygenase pynG catalyzes an epoxidation-mediated cyclization to form the dihydro-gamma-pyrone moiety, followed by pynD-catalyzed oxidation of the alcohol to the ketone and enolization to yield the characteristic tetramic acid-fused gamma-pyrone core of pyranonigrin H. Pyranonigrin H is substrate of pynH for dehydration-mediated exo-methylene formation from the serine side chain to produce pyranonigrin E, before the oxidase pynE reduces the exo-methylene of pyranonigrin E into a pendant methyl to form pyranonigrin G. The FAD-linked oxidoreductase pynB performs the reverse reaction and converts pyranonigrin G back to pyranonigrin E. In Aspergillus niger (strain ATCC MYA-4892 / CBS 513.88 / FGSC A1513), this protein is FAD-dependent monooxygenase pynG.